Consider the following 221-residue polypeptide: Germin-like protein subfamily 1 member 19 (221 aa).

Residues 1–21 form the signal peptide; it reads MKVSMSLILITLSALVTIAKA. The cysteines at positions 31 and 48 are disulfide-linked. One can recognise a Cupin type-1 domain in the interval 76–213; sequence SNVTTVNVDQ…AFQLDVNVVK (138 aa). N77 is a glycosylation site (N-linked (GlcNAc...) asparagine). Mn(2+) contacts are provided by H110, H112, E117, and H159.

It belongs to the germin family. As to quaternary structure, oligomer (believed to be a pentamer but probably hexamer).

It localises to the secreted. The protein localises to the extracellular space. The protein resides in the apoplast. Functionally, may play a role in plant defense. Probably has no oxalate oxidase activity even if the active site is conserved. The chain is Germin-like protein subfamily 1 member 19 from Arabidopsis thaliana (Mouse-ear cress).